The following is a 486-amino-acid chain: ATP synthase subunit beta (486 aa).

164–171 contacts ATP; it reads GGAGVGKT.

It belongs to the ATPase alpha/beta chains family. In terms of assembly, F-type ATPases have 2 components, CF(1) - the catalytic core - and CF(0) - the membrane proton channel. CF(1) has five subunits: alpha(3), beta(3), gamma(1), delta(1), epsilon(1). CF(0) has four main subunits: a(1), b(1), b'(1) and c(9-12).

The protein localises to the cellular thylakoid membrane. It catalyses the reaction ATP + H2O + 4 H(+)(in) = ADP + phosphate + 5 H(+)(out). In terms of biological role, produces ATP from ADP in the presence of a proton gradient across the membrane. The catalytic sites are hosted primarily by the beta subunits. The sequence is that of ATP synthase subunit beta from Prochlorococcus marinus (strain MIT 9215).